A 264-amino-acid polypeptide reads, in one-letter code: Thymidylate synthase (264 aa).

Arg21 provides a ligand contact to dUMP. A (6R)-5,10-methylene-5,6,7,8-tetrahydrofolate-binding site is contributed by His51. 126–127 (RR) is a dUMP binding site. Cys146 acts as the Nucleophile in catalysis. Residues 166 to 169 (RSAD), Asn177, and 207 to 209 (HIY) each bind dUMP. Asp169 contacts (6R)-5,10-methylene-5,6,7,8-tetrahydrofolate. Ser263 provides a ligand contact to (6R)-5,10-methylene-5,6,7,8-tetrahydrofolate.

It belongs to the thymidylate synthase family. Bacterial-type ThyA subfamily. As to quaternary structure, homodimer.

It is found in the cytoplasm. The enzyme catalyses dUMP + (6R)-5,10-methylene-5,6,7,8-tetrahydrofolate = 7,8-dihydrofolate + dTMP. The protein operates within pyrimidine metabolism; dTTP biosynthesis. In terms of biological role, catalyzes the reductive methylation of 2'-deoxyuridine-5'-monophosphate (dUMP) to 2'-deoxythymidine-5'-monophosphate (dTMP) while utilizing 5,10-methylenetetrahydrofolate (mTHF) as the methyl donor and reductant in the reaction, yielding dihydrofolate (DHF) as a by-product. This enzymatic reaction provides an intracellular de novo source of dTMP, an essential precursor for DNA biosynthesis. The sequence is that of Thymidylate synthase from Halalkalibacterium halodurans (strain ATCC BAA-125 / DSM 18197 / FERM 7344 / JCM 9153 / C-125) (Bacillus halodurans).